The chain runs to 366 residues: Growth hormone secretagogue receptor type 1 (366 aa).

The Extracellular segment spans residues 1 to 40; it reads MWNATPSEEPGSNLTRAELGWDAPPGNDSLADELLQLFPA. N-linked (GlcNAc...) asparagine glycosylation is found at N13 and N27. The chain crosses the membrane as a helical span at residues 41–66; the sequence is PLLAGVTATCVALFVVGIAGNLLTML. Topologically, residues 67 to 72 are cytoplasmic; the sequence is VVSRFR. A helical membrane pass occupies residues 73-96; it reads ELRTTTNLYLSSMAFSDLLIFLCM. At 97–117 the chain is on the extracellular side; that stretch reads PLDLVRLWQYRPWNFGDLLCK. Residues C116 and C198 are joined by a disulfide bond. The chain crosses the membrane as a helical span at residues 118 to 139; it reads LFQFVSESCTYATVLTITALSV. At 140-162 the chain is on the cytoplasmic side; that stretch reads ERYFAICFPLRAKVVVTKGRVKL. A helical transmembrane segment spans residues 163–183; it reads VILVIWALAFCSAGPIFVLVG. At 184–211 the chain is on the extracellular side; that stretch reads VEHENGTDPQDTNECRATEFAVRSGLLT. N-linked (GlcNAc...) asparagine glycosylation is present at N188. The helical transmembrane segment at 212–235 threads the bilayer; sequence IMVWVSSVFFFLPVFCLTVLYSLI. The Cytoplasmic portion of the chain corresponds to 236-263; sequence GRKLWRRKRGDGAVGSSLRDQNHRQTVK. Residues 264 to 285 form a helical membrane-spanning segment; that stretch reads MLAVVVFAFILCWLPFHVGRYL. At 286–302 the chain is on the extracellular side; that stretch reads FSKSFEPGSLEIAQISQ. Residues 303–326 traverse the membrane as a helical segment; that stretch reads YCNLVSFVLFYLSAAINPILYNIM. Over 327-366 the chain is Cytoplasmic; sequence SKKYRVAVFKLLGFEPFSQRKLSTLKDESSRAWTKSSINT.

The protein belongs to the G-protein coupled receptor 1 family.

It is found in the cell membrane. Receptor for ghrelin, coupled to G-alpha-11 proteins. Stimulates growth hormone secretion. Also binds other growth hormone releasing peptides (GHRP) (e.g. Met-enkephalin and GHRP-6) as well as non-peptide, low molecular weight secretagogues (e.g. L-692,429, MK-0677, adenosine). The protein is Growth hormone secretagogue receptor type 1 (GHSR) of Oryctolagus cuniculus (Rabbit).